The following is a 921-amino-acid chain: MDYKDTLFLPTTDFAMRGNLPQNEPKRFKAWYNERKVYEKMKAKRQSAGVSFNLHDGPPYANGHLHIGHALNKILKDIIVKTHYFAGENVRYVPGWDCHGLPIEQQIEIKLGGKKNETSKTKIREMCRAHAREFINIQRDEFKDMGIIGDWDDPYITMKFKFEAEIYKGLCEIAKKGLLIERSKPVFWSWAAGSALAEAEVEYKDKEDYSIYIAFDLSDEANKKIGAKGAKAVIWTTTPWTIPANQAICLNPDEIYVLTSENFIFAKHLLENLVQKGISKGKIVKEFASGELENLYAKNPLNDRPSKFILGEHVLMDGGTGLVHTAPGHGEDDYYVSLKYGIETIMPVDDAGKYDETIKTKKLFRDNVVDEFVGMHIFKANEKIVELLGDAVVSVGKFTHSYPYCWRTHKPVIYRATKQWFIAMDKPFKDGKTLREVALNALKEVKFYPEVGRNRITSMIENRPDWCISRQRDWGVPIAFFRDKATKEPIFDDEILNNIYEIFKEKGADAWWELDIGELLPKNCKYEAKNLEKVVDILDVWFDSGSTWRAVLKSGDYDAGEFRADMYLEGSDQHRGWFQSSLLVSSAINETAPYKSILTHGFTVDEKGQKMSKSVGNVIAPQEVAKKYGVEIMRLWVGLSDYSSDLKISDNILKQVSEQYRKIRNTIRFLLANVSDLKEIETNNFTMLDKWILSKANIAFEETNRAFRNYDFSKGFSVLLNFLSADLSGIYLDVCKDRLYCDELDSSRRRSAQSTMVLITRTLLPLIAPTLTYTVDEVMEFAPEIVKNGKKDAFDLVYEPLEFEDFKKNETGELFIESRAKFFEIIDTLKKEKKIKSTLELVLETSSNEILSHDLDEICDWYMVSHMRSIESRDFLAEFKVEDETFRLVLSDHHKCPRCWKFDAKNEDELCPRCQKVLNVK.

The short motif at 59 to 69 is the 'HIGH' region element; that stretch reads PYANGHLHIGH. Residue Glu569 participates in L-isoleucyl-5'-AMP binding. Residues 610–614 carry the 'KMSKS' region motif; the sequence is KMSKS. ATP is bound at residue Lys613. Positions 896, 899, 911, and 914 each coordinate Zn(2+).

Belongs to the class-I aminoacyl-tRNA synthetase family. IleS type 1 subfamily. Monomer. Requires Zn(2+) as cofactor.

It is found in the cytoplasm. The catalysed reaction is tRNA(Ile) + L-isoleucine + ATP = L-isoleucyl-tRNA(Ile) + AMP + diphosphate. Functionally, catalyzes the attachment of isoleucine to tRNA(Ile). As IleRS can inadvertently accommodate and process structurally similar amino acids such as valine, to avoid such errors it has two additional distinct tRNA(Ile)-dependent editing activities. One activity is designated as 'pretransfer' editing and involves the hydrolysis of activated Val-AMP. The other activity is designated 'posttransfer' editing and involves deacylation of mischarged Val-tRNA(Ile). The polypeptide is Isoleucine--tRNA ligase (Campylobacter hominis (strain ATCC BAA-381 / DSM 21671 / CCUG 45161 / LMG 19568 / NCTC 13146 / CH001A)).